The chain runs to 459 residues: Exodeoxyribonuclease 7 large subunit (459 aa).

It belongs to the XseA family. Heterooligomer composed of large and small subunits.

Its subcellular location is the cytoplasm. The catalysed reaction is Exonucleolytic cleavage in either 5'- to 3'- or 3'- to 5'-direction to yield nucleoside 5'-phosphates.. Bidirectionally degrades single-stranded DNA into large acid-insoluble oligonucleotides, which are then degraded further into small acid-soluble oligonucleotides. This Pseudomonas aeruginosa (strain ATCC 15692 / DSM 22644 / CIP 104116 / JCM 14847 / LMG 12228 / 1C / PRS 101 / PAO1) protein is Exodeoxyribonuclease 7 large subunit.